Reading from the N-terminus, the 119-residue chain is Large ribosomal subunit protein eL31 (119 aa).

It belongs to the eukaryotic ribosomal protein eL31 family.

The protein is Large ribosomal subunit protein eL31 (RPL31) of Cyanophora paradoxa.